Here is a 339-residue protein sequence, read N- to C-terminus: D-erythrose-4-phosphate dehydrogenase (339 aa).

11-12 contributes to the NAD(+) binding site; it reads RI. Substrate contacts are provided by residues 153–155, Arg-199, 212–213, and Arg-235; these read SCT and TK. Cys-154 (nucleophile) is an active-site residue. Asn-317 is a binding site for NAD(+).

The protein belongs to the glyceraldehyde-3-phosphate dehydrogenase family. Epd subfamily. As to quaternary structure, homotetramer.

It is found in the cytoplasm. The enzyme catalyses D-erythrose 4-phosphate + NAD(+) + H2O = 4-phospho-D-erythronate + NADH + 2 H(+). The protein operates within cofactor biosynthesis; pyridoxine 5'-phosphate biosynthesis; pyridoxine 5'-phosphate from D-erythrose 4-phosphate: step 1/5. In terms of biological role, catalyzes the NAD-dependent conversion of D-erythrose 4-phosphate to 4-phosphoerythronate. This is D-erythrose-4-phosphate dehydrogenase from Shewanella pealeana (strain ATCC 700345 / ANG-SQ1).